A 181-amino-acid chain; its full sequence is CD160 antigen (181 aa).

An N-terminal signal peptide occupies residues 1–24 (MLLEPGRGCCALAILLAIVDIQSG). In terms of domain architecture, Ig-like V-type spans 25-133 (GCINITSSAS…QGHFFSILFT (109 aa)). Asn28 carries N-linked (GlcNAc...) asparagine glycosylation. 2 cysteine pairs are disulfide-bonded: Cys44–Cys112 and Cys61–Cys68. Asn137 carries an N-linked (GlcNAc...) asparagine glycan. The GPI-anchor amidated serine moiety is linked to residue Ser159. The propeptide at 160 to 181 (SGFLQEKVWVMLVTSLVALQAL) is removed in mature form.

Homomultimer; disulfide-linked. Interacts with HLA-G. Interacts with HLA-A2-B2M in complex with an HIV-derived peptide. Interacts with TNFRSF14 (via cysteine-rich domain 1); this interaction is direct. Interacts with LCK and CD247/CD3 zeta chain. In terms of tissue distribution, expression is restricted to functional NK and cytotoxic T lymphocytes. Expressed in viral-specific effector memory and terminally differentiated effector memory CD8+ T cells. Expressed in memory and activated CD4+ T cell subsets (at protein level). Expressed at high levels in intraepithelial lymphocytes (at protein level). Expressed in both alpha-beta and gamma-delta CD8+ T cell subsets (at protein level). Expressed in umbilical vein endothelial cells (at protein level). Expressed in monocytes and at lower levels in B cells. Isoform 3: Expressed exclusively in activated NK cells (at protein level).

The protein resides in the cell membrane. It is found in the secreted. Receptor on immune cells capable to deliver stimulatory or inhibitory signals that regulate cell activation and differentiation. Exists as a GPI-anchored and as a transmembrane form, each likely initiating distinct signaling pathways via phosphoinositol 3-kinase in activated NK cells and via LCK and CD247/CD3 zeta chain in activated T cells. Receptor for both classical and non-classical MHC class I molecules. In the context of acute viral infection, recognizes HLA-C and triggers NK cell cytotoxic activity, likely playing a role in anti-viral innate immune response. On CD8+ T cells, binds HLA-A2-B2M in complex with a viral peptide and provides a costimulatory signal to activated/memory T cells. Upon persistent antigen stimulation, such as occurs during chronic viral infection, may progressively inhibit TCR signaling in memory CD8+ T cells, contributing to T cell exhaustion. On endothelial cells, recognizes HLA-G and controls angiogenesis in immune privileged sites. Receptor or ligand for TNF superfamily member TNFRSF14, participating in bidirectional cell-cell contact signaling between antigen presenting cells and lymphocytes. Upon ligation of TNFRSF14, provides stimulatory signal to NK cells enhancing IFNG production and anti-tumor immune response. On activated CD4+ T cells, interacts with TNFRSF14 and down-regulates CD28 costimulatory signaling, restricting memory and alloantigen-specific immune response. In the context of bacterial infection, acts as a ligand for TNFRSF14 on epithelial cells, triggering the production of antimicrobial proteins and pro-inflammatory cytokines. Its function is as follows. The soluble GPI-cleaved form, usually released by activated lymphocytes, might play an immune regulatory role by limiting lymphocyte effector functions. This is CD160 antigen from Homo sapiens (Human).